The chain runs to 685 residues: MTEQNRILCRELSLLAFNRRVLAQAEDKNVPLLERLRFLCIVSSNLDEFFEVRMAWLKRENKLHPRRRPDNGKMPSETIADVTEAARSLIRHQYDLFNNVLQPELARESIHFYRRRNWTGTQKKWIEDYFDRELLPILTPIGLDPSHPFPRPLNKSLNFAVELDGTDAFGRPSGMAIVQAPRILPRVVPLPSELCGGGHGFVFLSSILHAHVGKLFPGMNVKGCHQFRLTRDSDLTVDEEDVQNLRAAIQNELHDREYGDGVRLEVADTCPAYIRDFLLAQFRLTDAELYQVKGPVNLVRLNAVPDLVNRPDLKFPPHTPGRLKALGKNSPIFDLVRQSPILLHHPYQSFDPVVDMIREAAADPAVLAVKMTIYRTGTRSELVPALMKAALADKQVTVVVELMARFDEANNVNWAKQLEEAGAHVVYGVFGYKVHAKMALVIRREDGVLKRYAHLGTGNYHQGTSRIYTDFGLITADEQITADVNTLFMEITGLGKPGRLNKLYQSPFTLHKMVIGRIARETEHAKAGKPARITAKMNSLIEPTVIEALYRASAAGVQIDLIVRGMCTLRPGVKGLSENIRVRSIVGRQLEHARVYCFHNNGADDTFISSADWMGRNFFRRIETATPITAPELKKRVIREGLEMALADNTHAWLMQPDGGYIRAAPAEGESEADLQNDLWDLLRG.

N45 is a binding site for ATP. Mg(2+) is bound by residues R375 and R405. H435 functions as the Phosphohistidine intermediate in the catalytic mechanism. ATP-binding residues include Y468, R564, and H592.

It belongs to the polyphosphate kinase 1 (PPK1) family. Mg(2+) is required as a cofactor. Post-translationally, an intermediate of this reaction is the autophosphorylated ppk in which a phosphate is covalently linked to a histidine residue through a N-P bond.

The enzyme catalyses [phosphate](n) + ATP = [phosphate](n+1) + ADP. Functionally, catalyzes the reversible transfer of the terminal phosphate of ATP to form a long-chain polyphosphate (polyP). The sequence is that of Polyphosphate kinase from Neisseria gonorrhoeae (strain ATCC 700825 / FA 1090).